The chain runs to 1142 residues: Fibronectin type-III domain-containing protein 3A (1142 aa).

The disordered stretch occupies residues 104–191; that stretch reads YGDVDAHSTH…KSGKGKGGTQ (88 aa). Basic and acidic residues predominate over residues 107-145; sequence VDAHSTHGRSNFRDERSSKTYERLQKKLKDRQGTQKDKM. The segment covering 146–158 has biased composition (low complexity); sequence SSPPSSPQKCPSP. Residues Ser-147, Ser-151, and Ser-157 each carry the phosphoserine modification. Fibronectin type-III domains lie at 212-313, 317-409, 413-506, 510-604, 608-701, 705-795, 805-894, 895-989, and 990-1095; these read NIVK…TLSC, IPNP…TSGC, MPAS…TCPD, IPVK…TPAV, PCLP…TAPG, QCKP…TPPS, EISD…TKPL, PPDP…TPKS, and VPAA…TEPP. Position 328 is an N6-acetyllysine (Lys-328). The chain crosses the membrane as a helical span at residues 1121–1141; the sequence is NLVLFAFFSILIAFIIQYFVI.

This sequence belongs to the FNDC3 family.

It localises to the golgi apparatus membrane. In terms of biological role, mediates spermatid-Sertoli adhesion during spermatogenesis. The protein is Fibronectin type-III domain-containing protein 3A (FNDC3A) of Pongo abelii (Sumatran orangutan).